We begin with the raw amino-acid sequence, 264 residues long: MIQVENLSFSYQNNKVFKNLSFSIKKGEYLCIIGKNGSGKSTLAKLLAGLIFKQEGSIKISGYDTKNQKDLLEIRKLVGIIFQNPENQIINTTVFDEVVFGLENLATPRENIKEIAENSLKSVALLEYKDRLTYQLSGGEKQRLAIASVLAMGTEILIFDEAISMLDPVGKKEVLKLMKELNSQGKTIIHITHNRNDILEASEVMVLSNGEIKYQGNPYKIFEDDEFNPFLIKIKNILEKNNIKIDDKNINMEDLVRLVYENIS.

One can recognise an ABC transporter domain in the interval 2–234; the sequence is IQVENLSFSY…DEFNPFLIKI (233 aa). 34–41 is an ATP binding site; sequence GKNGSGKS.

It belongs to the ABC transporter superfamily. Energy-coupling factor EcfA family. Forms a stable energy-coupling factor (ECF) transporter complex composed of 2 membrane-embedded substrate-binding proteins (S component), 2 ATP-binding proteins (A component) and 2 transmembrane proteins (T component).

It is found in the cell inner membrane. Functionally, ATP-binding (A) component of a common energy-coupling factor (ECF) ABC-transporter complex. Unlike classic ABC transporters this ECF transporter provides the energy necessary to transport a number of different substrates. This Fusobacterium nucleatum subsp. nucleatum (strain ATCC 25586 / DSM 15643 / BCRC 10681 / CIP 101130 / JCM 8532 / KCTC 2640 / LMG 13131 / VPI 4355) protein is Energy-coupling factor transporter ATP-binding protein EcfA1.